A 339-amino-acid chain; its full sequence is Probable E3 ubiquitin-protein ligase BAH1-like 1 (339 aa).

An SPX domain is found at 1 to 163; it reads MKFGAIYEEY…GSVSGRDFKS (163 aa). An RING-type zinc finger spans residues 235-284; the sequence is CPICLDTLFNPYALSCGHLFCKGCACGAASVYIFQGVKSAPPEAKCPVCR.

Belongs to the RING-type zinc finger family.

It carries out the reaction S-ubiquitinyl-[E2 ubiquitin-conjugating enzyme]-L-cysteine + [acceptor protein]-L-lysine = [E2 ubiquitin-conjugating enzyme]-L-cysteine + N(6)-ubiquitinyl-[acceptor protein]-L-lysine.. It functions in the pathway protein modification; protein ubiquitination. This is Probable E3 ubiquitin-protein ligase BAH1-like 1 from Oryza sativa subsp. indica (Rice).